A 250-amino-acid chain; its full sequence is tRNA (guanine-N(1)-)-methyltransferase (250 aa).

Residues glycine 113 and 134–139 (IGDYVL) each bind S-adenosyl-L-methionine.

It belongs to the RNA methyltransferase TrmD family. As to quaternary structure, homodimer.

The protein resides in the cytoplasm. The catalysed reaction is guanosine(37) in tRNA + S-adenosyl-L-methionine = N(1)-methylguanosine(37) in tRNA + S-adenosyl-L-homocysteine + H(+). Specifically methylates guanosine-37 in various tRNAs. This Buchnera aphidicola subsp. Baizongia pistaciae (strain Bp) protein is tRNA (guanine-N(1)-)-methyltransferase.